Reading from the N-terminus, the 241-residue chain is Ribosomal RNA small subunit methyltransferase G (241 aa).

Residues G79, F84, 130 to 131 (AE), and R150 contribute to the S-adenosyl-L-methionine site.

It belongs to the methyltransferase superfamily. RNA methyltransferase RsmG family.

It is found in the cytoplasm. In terms of biological role, specifically methylates the N7 position of a guanine in 16S rRNA. The polypeptide is Ribosomal RNA small subunit methyltransferase G (Ligilactobacillus salivarius (strain UCC118) (Lactobacillus salivarius)).